The primary structure comprises 132 residues: Fluoride-specific ion channel FluC 2 (132 aa).

Transmembrane regions (helical) follow at residues 5-25 (VAVF…NLLG), 34-54 (TFIE…FFAA), 59-79 (PLVQ…MSAF), and 95-115 (VLYL…GIVI). 2 residues coordinate Na(+): Gly-71 and Thr-74.

It belongs to the fluoride channel Fluc/FEX (TC 1.A.43) family.

The protein localises to the cell membrane. It catalyses the reaction fluoride(in) = fluoride(out). Na(+) is not transported, but it plays an essential structural role and its presence is essential for fluoride channel function. Its function is as follows. Fluoride-specific ion channel. Important for reducing fluoride concentration in the cell, thus reducing its toxicity. The chain is Fluoride-specific ion channel FluC 2 from Bacillus licheniformis (strain ATCC 14580 / DSM 13 / JCM 2505 / CCUG 7422 / NBRC 12200 / NCIMB 9375 / NCTC 10341 / NRRL NRS-1264 / Gibson 46).